Reading from the N-terminus, the 590-residue chain is MCGIVACILKDGSAAPVLLECVRRLEYRGYDSVGIATSDPMIRIKKDSGKIDEVDAELDLADLPGTMGIAHVRWATHGLPTAENAHPHTDCSGEIAVVHNGIIENYLEVKEELESEGHIFRSETDTEVIPHLIEKYMDEGMDLEAATATALRKLRGAYAIAAVSSREPGRIVGARKESPLIVGVGEGEYFLASDVPAILNHTSRVIYLDDGEMVILDGDLRVTDMEGNTVEKEVHSIDWSADMAEKGGYDHFMLKEIHEEPSAVRDTLTEWDEVLGVVEEIGEVERICFVACGTSYHASLVGKYLFESLLGIPTDVILASEFRYSAGALNDRTLAIFISQSGETADTLNALRAANSRAKTLAIVNVLGSSATREAQHVLYTRAGPEIGVAATKTYVSQLTVIYMLVAAMGAPELMDRLERVPEFMERALEDEDGIKELAATCSDVSDFFFIGRGFAYPTALEGALKLKEITYIHGEGYAAGELKHGPLALIDNGVPVVAISPPGPCHDKTLSNVEEVRARGARVIGVGSISDESLRKEADDFIGLDPEVDDVISPLVYIVPLQLLSYHVSVERGLDPDKPKNLAKCVTVE.

The active-site Nucleophile; for GATase activity is Cys2. The Glutamine amidotransferase type-2 domain occupies 2–219 (CGIVACILKD…DGEMVILDGD (218 aa)). 2 consecutive SIS domains span residues 277 to 415 (VVEE…PELM) and 438 to 580 (LAAT…PDKP). Lys585 functions as the For Fru-6P isomerization activity in the catalytic mechanism.

As to quaternary structure, homodimer.

Its subcellular location is the cytoplasm. The enzyme catalyses D-fructose 6-phosphate + L-glutamine = D-glucosamine 6-phosphate + L-glutamate. Catalyzes the first step in hexosamine metabolism, converting fructose-6P into glucosamine-6P using glutamine as a nitrogen source. The chain is Glutamine--fructose-6-phosphate aminotransferase [isomerizing] from Methanothermobacter thermautotrophicus (strain ATCC 29096 / DSM 1053 / JCM 10044 / NBRC 100330 / Delta H) (Methanobacterium thermoautotrophicum).